The chain runs to 407 residues: UPF0597 protein NAMH_0191 (407 aa).

This sequence belongs to the UPF0597 family.

This chain is UPF0597 protein NAMH_0191, found in Nautilia profundicola (strain ATCC BAA-1463 / DSM 18972 / AmH).